We begin with the raw amino-acid sequence, 363 residues long: Ethanol acetyltransferase 1 (363 aa).

Residues 1-19 (MLLAYTVRPSNWSFTRRAY) constitute a mitochondrion transit peptide. Positions 65 to 164 (PIIFYHGLLG…FSAACIIDNS (100 aa)) constitute an AB hydrolase-1 domain. Active-site charge relay system residues include S138, D162, and H313.

The protein belongs to the AB hydrolase superfamily.

It is found in the mitochondrion. It catalyses the reaction ethanol + acetyl-CoA = ethyl acetate + CoA. It carries out the reaction acetyl-CoA + H2O = acetate + CoA + H(+). The catalysed reaction is ethyl acetate + H2O = ethanol + acetate + H(+). Alcohol acetyltransferase that catalyzes the synthesis of ethyl acetate from ethanol and acetyl-CoA. Can also function as a thioesterase by hydrolyzing acetyl-CoA in the absence of ethanol, as well as esterase hydrolyzing ethyl acetate. This is Ethanol acetyltransferase 1 (EAT1) from Kluyveromyces marxianus (strain DMKU3-1042 / BCC 29191 / NBRC 104275) (Yeast).